The following is a 422-amino-acid chain: Putative nickel insertion protein (422 aa).

It belongs to the LarC family.

This chain is Putative nickel insertion protein, found in Synechocystis sp. (strain ATCC 27184 / PCC 6803 / Kazusa).